Here is an 892-residue protein sequence, read N- to C-terminus: Alanine--tRNA ligase (892 aa).

Residues His-574, His-578, Cys-677, and His-681 each coordinate Zn(2+).

It belongs to the class-II aminoacyl-tRNA synthetase family. It depends on Zn(2+) as a cofactor.

The protein resides in the cytoplasm. The catalysed reaction is tRNA(Ala) + L-alanine + ATP = L-alanyl-tRNA(Ala) + AMP + diphosphate. Its function is as follows. Catalyzes the attachment of alanine to tRNA(Ala) in a two-step reaction: alanine is first activated by ATP to form Ala-AMP and then transferred to the acceptor end of tRNA(Ala). Also edits incorrectly charged Ser-tRNA(Ala) and Gly-tRNA(Ala) via its editing domain. This Mesoplasma florum (strain ATCC 33453 / NBRC 100688 / NCTC 11704 / L1) (Acholeplasma florum) protein is Alanine--tRNA ligase.